Reading from the N-terminus, the 358-residue chain is Phosphoserine aminotransferase (358 aa).

An L-glutamate-binding site is contributed by arginine 43. Pyridoxal 5'-phosphate contacts are provided by tryptophan 103, threonine 153, aspartate 172, and glutamine 195. Position 196 is an N6-(pyridoxal phosphate)lysine (lysine 196). Residue 236–237 coordinates pyridoxal 5'-phosphate; the sequence is NT.

The protein belongs to the class-V pyridoxal-phosphate-dependent aminotransferase family. SerC subfamily. Homodimer. It depends on pyridoxal 5'-phosphate as a cofactor.

Its subcellular location is the cytoplasm. It catalyses the reaction O-phospho-L-serine + 2-oxoglutarate = 3-phosphooxypyruvate + L-glutamate. The enzyme catalyses 4-(phosphooxy)-L-threonine + 2-oxoglutarate = (R)-3-hydroxy-2-oxo-4-phosphooxybutanoate + L-glutamate. The protein operates within amino-acid biosynthesis; L-serine biosynthesis; L-serine from 3-phospho-D-glycerate: step 2/3. Its pathway is cofactor biosynthesis; pyridoxine 5'-phosphate biosynthesis; pyridoxine 5'-phosphate from D-erythrose 4-phosphate: step 3/5. Its function is as follows. Catalyzes the reversible conversion of 3-phosphohydroxypyruvate to phosphoserine and of 3-hydroxy-2-oxo-4-phosphonooxybutanoate to phosphohydroxythreonine. This chain is Phosphoserine aminotransferase, found in Dichelobacter nodosus (strain VCS1703A).